The following is a 300-amino-acid chain: 4-diphosphocytidyl-2-C-methyl-D-erythritol kinase (300 aa).

Residue Lys12 is part of the active site. Position 94-104 (Pro94–Ser104) interacts with ATP. The active site involves Asp136.

Belongs to the GHMP kinase family. IspE subfamily.

The enzyme catalyses 4-CDP-2-C-methyl-D-erythritol + ATP = 4-CDP-2-C-methyl-D-erythritol 2-phosphate + ADP + H(+). It participates in isoprenoid biosynthesis; isopentenyl diphosphate biosynthesis via DXP pathway; isopentenyl diphosphate from 1-deoxy-D-xylulose 5-phosphate: step 3/6. Catalyzes the phosphorylation of the position 2 hydroxy group of 4-diphosphocytidyl-2C-methyl-D-erythritol. The polypeptide is 4-diphosphocytidyl-2-C-methyl-D-erythritol kinase (Verminephrobacter eiseniae (strain EF01-2)).